We begin with the raw amino-acid sequence, 166 residues long: Protein-export protein SecB (166 aa).

This sequence belongs to the SecB family. Homotetramer, a dimer of dimers. One homotetramer interacts with 1 SecA dimer.

The protein localises to the cytoplasm. In terms of biological role, one of the proteins required for the normal export of preproteins out of the cell cytoplasm. It is a molecular chaperone that binds to a subset of precursor proteins, maintaining them in a translocation-competent state. It also specifically binds to its receptor SecA. The protein is Protein-export protein SecB of Actinobacillus pleuropneumoniae serotype 5b (strain L20).